Reading from the N-terminus, the 91-residue chain is Uteroglobin (91 aa).

A signal peptide spans 1 to 21; sequence MKLTITLALVTLALLCSPASA.

Belongs to the secretoglobin family. In terms of assembly, antiparallel homodimer; disulfide-linked. Interaction with LMBR1L is controversial.

Its subcellular location is the secreted. Its function is as follows. Uteroglobin binds progesterone specifically and with high affinity. It may regulate progesterone concentrations reaching the blastocyst. It is also a potent inhibitor of phospholipase A2. This Lepus capensis (Brown hare) protein is Uteroglobin (SCGB1A1).